Reading from the N-terminus, the 141-residue chain is Hemoglobin subunit alpha-1/2 (141 aa).

Residues 1-141 (VLSPADKKNV…VSTVLTSKYR (141 aa)) form the Globin domain. The residue at position 3 (Ser3) is a Phosphoserine. An N6-succinyllysine mark is found at Lys7 and Lys11. Lys16 carries the N6-acetyllysine; alternate modification. Lys16 carries the N6-succinyllysine; alternate modification. Tyr24 is modified (phosphotyrosine). Phosphoserine is present on Ser35. An N6-succinyllysine modification is found at Lys40. Ser49 carries the phosphoserine modification. His58 provides a ligand contact to O2. His87 lines the heme b pocket. Ser102 carries the post-translational modification Phosphoserine. Phosphothreonine is present on Thr108. Phosphoserine is present on residues Ser124 and Ser131. Residues Thr134 and Thr137 each carry the phosphothreonine modification. Position 138 is a phosphoserine (Ser138).

This sequence belongs to the globin family. As to quaternary structure, heterotetramer of two alpha chains and two beta chains. Red blood cells.

Its function is as follows. Involved in oxygen transport from the lung to the various peripheral tissues. The sequence is that of Hemoglobin subunit alpha-1/2 from Mandrillus sphinx (Mandrill).